We begin with the raw amino-acid sequence, 341 residues long: Ribose-phosphate pyrophosphokinase 5 (341 aa).

3 residues coordinate Mg(2+): aspartate 152, histidine 154, and aspartate 167.

It belongs to the ribose-phosphate pyrophosphokinase family.

It is found in the cytoplasm. It carries out the reaction D-ribose 5-phosphate + ATP = 5-phospho-alpha-D-ribose 1-diphosphate + AMP + H(+). It participates in metabolic intermediate biosynthesis; 5-phospho-alpha-D-ribose 1-diphosphate biosynthesis; 5-phospho-alpha-D-ribose 1-diphosphate from D-ribose 5-phosphate (route I): step 1/1. Functionally, 5-phosphoribose 1-diphosphate synthase involved in nucleotide, histidine, and tryptophan biosynthesis. Active in heteromultimeric complexes with other 5-phosphoribose 1-diphosphate synthases. The polypeptide is Ribose-phosphate pyrophosphokinase 5 (Schizosaccharomyces pombe (strain 972 / ATCC 24843) (Fission yeast)).